The chain runs to 230 residues: Orotidine 5'-phosphate decarboxylase (230 aa).

Residues Asp-10, Lys-32, 59–68 (DLKYHDIPNT), Thr-119, Arg-180, Gln-189, Gly-209, and Arg-210 contribute to the substrate site. Lys-61 (proton donor) is an active-site residue.

The protein belongs to the OMP decarboxylase family. Type 1 subfamily. As to quaternary structure, homodimer.

It carries out the reaction orotidine 5'-phosphate + H(+) = UMP + CO2. Its pathway is pyrimidine metabolism; UMP biosynthesis via de novo pathway; UMP from orotate: step 2/2. In terms of biological role, catalyzes the decarboxylation of orotidine 5'-monophosphate (OMP) to uridine 5'-monophosphate (UMP). This chain is Orotidine 5'-phosphate decarboxylase, found in Haemophilus influenzae (strain 86-028NP).